Consider the following 1079-residue polypeptide: Electrogenic sodium bicarbonate cotransporter 1 (1079 aa).

A required for interaction with AHCYL1 region spans residues 1–62; sequence MEDEAVLDRG…EKREKERISE (62 aa). The Cytoplasmic portion of the chain corresponds to 1–466; the sequence is MEDEAVLDRG…FASDFYDALN (466 aa). Tyrosine 30 is subject to Phosphotyrosine. Positions 39–52 are enriched in basic residues; sequence YRRRRRHKRKTGHK. The segment at 39-78 is disordered; that stretch reads YRRRRRHKRKTGHKEKREKERISENYSDKSDVENADESSS. Threonine 49 carries the post-translational modification Phosphothreonine; by PKA. Residues 53-70 are compositionally biased toward basic and acidic residues; sequence EKREKERISENYSDKSDV. 7 positions are modified to phosphoserine: serine 61, serine 65, serine 68, serine 223, serine 232, serine 233, and serine 245. The disordered stretch occupies residues 237 to 265; sequence MFTSPDNGSPAMTHRNLTSSSLNDISDKP. Phosphothreonine occurs at positions 249 and 254. Residues 251 to 260 show a composition bias toward polar residues; sequence RNLTSSSLND. A phosphoserine mark is found at serine 256, serine 257, and serine 262. Residues 467–491 form a helical membrane-spanning segment; it reads IQSLSAILFIYLATVTNAITFGGLL. Residues 492–501 lie on the Extracellular side of the membrane; that stretch reads GDATDNMQGV. A helical transmembrane segment spans residues 502 to 520; sequence LESFLGTAVSGAIFCLFAG. A topological domain (cytoplasmic) is located at residue glutamine 521. The chain crosses the membrane as a discontinuously helical span at residues 522-542; the sequence is PLTILSSTGPVLVFERLLFNF. The Extracellular segment spans residues 543-550; sequence SKDHNFDY. A helical membrane pass occupies residues 551–571; that stretch reads LEFRLWIGLWSAFLCLILVAT. The Cytoplasmic segment spans residues 572–585; it reads DASFLVQYFTRFTE. A helical transmembrane segment spans residues 586–609; that stretch reads EGFSSLISFIFIYDAFKKMIKLAD. At 610–692 the chain is on the extracellular side; the sequence is YYPINSDFKV…GNNCNFVPDV (83 aa). A helical transmembrane segment spans residues 693–710; sequence TLMSFILFLGTYTSSMAL. Topologically, residues 711–725 are cytoplasmic; that stretch reads KKFKTSRYFPTTARK. Residues 726-745 form a helical membrane-spanning segment; it reads LISDFAIILSILIFCVIDAL. Residues 746–779 are Extracellular-facing; it reads VGVDTPKLIVPSEFKPTSPNRGWFVPPFGGNPWW. The interaction with CA4 stretch occupies residues 748–779; the sequence is VDTPKLIVPSEFKPTSPNRGWFVPPFGGNPWW. The chain crosses the membrane as a helical span at residues 780–807; it reads VYLAAAIPALLVTILIFMDQQITAVIVN. The Cytoplasmic segment spans residues 808–819; the sequence is RKEHKLKKGAGY. The helical transmembrane segment at 820-836 threads the bilayer; sequence HLDLFWVAILMVVCSFM. A topological domain (extracellular) is located at residue alanine 837. The discontinuously helical transmembrane segment at 838 to 855 threads the bilayer; that stretch reads LPWYVAATVISIAHIDSL. Residues 856 to 877 lie on the Cytoplasmic side of the membrane; that stretch reads KMETETSAPGEQPKFLGVREQR. The chain crosses the membrane as a helical span at residues 878-894; it reads VTGTLVFILTGLSVFMA. At 895 to 901 the chain is on the extracellular side; sequence PILKFIP. Residues 902-918 traverse the membrane as a helical segment; it reads MPVLYGVFLYMGVASLN. Over 919–960 the chain is Cytoplasmic; that stretch reads GVQFMDRLKLLLMPLKHQPDFIYLRHVPLRRVHLFTFLQVLC. Residues 961-986 constitute an intramembrane region (discontinuously helical); sequence LALLWILKSTVAAIIFPVMILALVAV. Over 987–1079 the chain is Cytoplasmic; the sequence is RKGMDYLFSQ…STFLERHTSC (93 aa). The interval 1002–1004 is CA2-binding; the sequence is LDD. The segment at 1012 to 1079 is disordered; the sequence is KKKEDEKKKK…STFLERHTSC (68 aa). Serine 1026 carries the phosphoserine; by PKA modification. Serine 1029 bears the Phosphoserine mark. The interval 1030 to 1033 is CA2-binding; it reads DNDD. Residues serine 1034 and serine 1044 each carry the phosphoserine modification. Positions 1057-1059 are required for basolateral targeting; sequence FLS. Basic and acidic residues predominate over residues 1062–1079; sequence KPSDREKSSTFLERHTSC. At serine 1069 the chain carries Phosphoserine.

Belongs to the anion exchanger (TC 2.A.31) family. In terms of assembly, homodimer. Interacts with CA2/carbonic anhydrase 2 and CA4/carbonic anhydrase 4 which may regulate transporter activity. Isoform 1 but not isoform 2 interacts with AHCYL1 (via PEST domain when phosphorylated); the interaction increases SLC4A4 isoform 1 activity. Interacts with AHCYL2. Post-translationally, phosphorylation of Ser-1026 by PKA increases the binding of CA2 and changes the Na(+):HCO3(-) stoichiometry of the transporter from 3:1 to 2:1. Phosphorylated in presence of STK39 and dephosphorylated in presence of PP1 phosphatase; phosphorylation seems to inhibit SLC4A4 activity. N-glycosylated. May not be necessary for the transporter basic functions. In terms of tissue distribution, expressed in colonic mucosa, kidney cortex and to gastric mucosa.

It is found in the basolateral cell membrane. It localises to the cell membrane. The catalysed reaction is 2 hydrogencarbonate(out) + Na(+)(out) = 2 hydrogencarbonate(in) + Na(+)(in). It catalyses the reaction 3 hydrogencarbonate(out) + Na(+)(out) = 3 hydrogencarbonate(in) + Na(+)(in). In terms of biological role, electrogenic sodium/bicarbonate cotransporter with a Na(+):HCO3(-) stoichiometry varying from 1:2 to 1:3. May regulate bicarbonate influx/efflux at the basolateral membrane of cells and regulate intracellular pH. The protein is Electrogenic sodium bicarbonate cotransporter 1 (SLC4A4) of Oryctolagus cuniculus (Rabbit).